The following is a 300-amino-acid chain: Shikimate kinase, chloroplastic (300 aa).

The transit peptide at 1-65 directs the protein to the chloroplast; the sequence is MEARVSQSLQ…SDRRVQLKVS (65 aa). 111–118 serves as a coordination point for ATP; sequence GMMGCGKT. T118 lines the Mg(2+) pocket. Substrate is bound by residues D136, R161, and G183. R222 contributes to the ATP binding site.

The protein belongs to the shikimate kinase family. The cofactor is Mg(2+).

Its subcellular location is the plastid. The protein localises to the chloroplast. It catalyses the reaction shikimate + ATP = 3-phosphoshikimate + ADP + H(+). Its pathway is metabolic intermediate biosynthesis; chorismate biosynthesis; chorismate from D-erythrose 4-phosphate and phosphoenolpyruvate: step 5/7. Its function is as follows. Catalyzes the specific phosphorylation of the 3-hydroxyl group of shikimic acid using ATP as a cosubstrate. The chain is Shikimate kinase, chloroplastic (SK) from Solanum lycopersicum (Tomato).